Reading from the N-terminus, the 252-residue chain is Chitooligosaccharide deacetylase (252 aa).

Residues His61 and His125 each coordinate Mg(2+).

This sequence belongs to the YdjC deacetylase family. ChbG subfamily. Homodimer. The cofactor is Mg(2+).

The protein resides in the cytoplasm. The catalysed reaction is N,N'-diacetylchitobiose + H2O = N-acetyl-beta-D-glucosaminyl-(1-&gt;4)-D-glucosamine + acetate. The enzyme catalyses diacetylchitobiose-6'-phosphate + H2O = N'-monoacetylchitobiose-6'-phosphate + acetate. It participates in glycan degradation; chitin degradation. Functionally, involved in the degradation of chitin. ChbG is essential for growth on the acetylated chitooligosaccharides chitobiose and chitotriose but is dispensable for growth on cellobiose and chitosan dimer, the deacetylated form of chitobiose. Deacetylation of chitobiose-6-P and chitotriose-6-P is necessary for both the activation of the chb promoter by the regulatory protein ChbR and the hydrolysis of phosphorylated beta-glucosides by the phospho-beta-glucosidase ChbF. Catalyzes the removal of only one acetyl group from chitobiose-6-P to yield monoacetylchitobiose-6-P, the inducer of ChbR and the substrate of ChbF. This chain is Chitooligosaccharide deacetylase, found in Salmonella dublin (strain CT_02021853).